The sequence spans 424 residues: MHLNSSVPQGTPGEPDAQPFSGPQSEMEATFLALSLSNGSGNTSESDTAGPNSDLDVNTDIYSKVLVTAIYLALFVVGTVGNSVTAFTLARKKSLQSLQSTVHYHLGSLALSDLLILLLAMPVELYNFIWVHHPWAFGDAGCRGYYFLRDACTYATALNVASLSVERYLAICHPFKAKTLMSRSRTKKFISAIWLASALLAIPMLFTMGLQNRSGDGTHPGGLVCTPIVDTATVKVVIQVNTFMSFLFPMLVISILNTVIANKLTVMVHQAAEQGRVCTVGTHNGLEHSTFNMTIEPGRVQALRHGVLVLRAVVIAFVVCWLPYHVRRLMFCYISDEQWTTFLFDFYHYFYMLTNALFYVSSAINPILYNLVSANFRQVFLSTLACLCPGWRHRRKKRPTFSRKPNSMSSNHAFSTSATRETLY.

A disordered region spans residues 1–23; the sequence is MHLNSSVPQGTPGEPDAQPFSGP. Residues 1–68 lie on the Extracellular side of the membrane; sequence MHLNSSVPQG…TDIYSKVLVT (68 aa). 3 N-linked (GlcNAc...) asparagine glycosylation sites follow: N4, N38, and N42. Residues 69–89 form a helical membrane-spanning segment; that stretch reads AIYLALFVVGTVGNSVTAFTL. Residues 90 to 103 are Cytoplasmic-facing; that stretch reads ARKKSLQSLQSTVH. The chain crosses the membrane as a helical span at residues 104 to 123; the sequence is YHLGSLALSDLLILLLAMPV. The Extracellular segment spans residues 124 to 143; sequence ELYNFIWVHHPWAFGDAGCR. C142 and C225 are disulfide-bonded. A helical transmembrane segment spans residues 144–165; the sequence is GYYFLRDACTYATALNVASLSV. Residues 166–185 are Cytoplasmic-facing; sequence ERYLAICHPFKAKTLMSRSR. A helical membrane pass occupies residues 186-206; that stretch reads TKKFISAIWLASALLAIPMLF. Residues 207–235 are Extracellular-facing; that stretch reads TMGLQNRSGDGTHPGGLVCTPIVDTATVK. Residues 236–260 traverse the membrane as a helical segment; it reads VVIQVNTFMSFLFPMLVISILNTVI. Topologically, residues 261-308 are cytoplasmic; sequence ANKLTVMVHQAAEQGRVCTVGTHNGLEHSTFNMTIEPGRVQALRHGVL. A helical transmembrane segment spans residues 309 to 330; the sequence is VLRAVVIAFVVCWLPYHVRRLM. A neurotensin binding region spans residues 326–349; that stretch reads VRRLMFCYISDEQWTTFLFDFYHY. Residues 331–348 are Extracellular-facing; sequence FCYISDEQWTTFLFDFYH. Residues 349 to 369 form a helical membrane-spanning segment; sequence YFYMLTNALFYVSSAINPILY. Residues 370 to 424 are Cytoplasmic-facing; sequence NLVSANFRQVFLSTLACLCPGWRHRRKKRPTFSRKPNSMSSNHAFSTSATRETLY. S-palmitoyl cysteine attachment occurs at residues C386 and C388. Residues 397 to 424 form a disordered region; that stretch reads KRPTFSRKPNSMSSNHAFSTSATRETLY. A compositionally biased stretch (polar residues) spans 403–424; that stretch reads RKPNSMSSNHAFSTSATRETLY.

Belongs to the G-protein coupled receptor 1 family. Neurotensin receptor subfamily. NTSR1 sub-subfamily. Interacts (palmitoylated form) with GNA11. N-glycosylated. Post-translationally, palmitoylated; this is required for normal localization at membrane rafts and normal GNA11-mediated activation of down-stream signaling cascades. The palmitoylation level increases in response to neurotensin treatment. As to expression, detected in brain and small intestine.

It localises to the cell membrane. The protein resides in the membrane raft. G-protein coupled receptor for the tridecapeptide neurotensin (NTS). Signaling is effected via G proteins that activate a phosphatidylinositol-calcium second messenger system. Signaling leads to the activation of downstream MAP kinases and protects cells against apoptosis. The protein is Neurotensin receptor type 1 (Ntsr1) of Rattus norvegicus (Rat).